The primary structure comprises 142 residues: Small heat shock protein IbpB (142 aa).

The sHSP domain maps to 26-137 (AGESQSFPPY…APQRIAISER (112 aa)).

The protein belongs to the small heat shock protein (HSP20) family. As to quaternary structure, homodimer. Forms homomultimers of about 100-150 subunits at optimal growth temperatures. Conformation changes to oligomers at high temperatures or high ionic concentrations. The decrease in size of the multimers is accompanied by an increase in chaperone activity.

It is found in the cytoplasm. Its function is as follows. Associates with aggregated proteins, together with IbpA, to stabilize and protect them from irreversible denaturation and extensive proteolysis during heat shock and oxidative stress. Aggregated proteins bound to the IbpAB complex are more efficiently refolded and reactivated by the ATP-dependent chaperone systems ClpB and DnaK/DnaJ/GrpE. Its activity is ATP-independent. The chain is Small heat shock protein IbpB from Klebsiella pneumoniae subsp. pneumoniae (strain ATCC 700721 / MGH 78578).